Consider the following 227-residue polypeptide: MAYPFQLGLQDATSPIMEELLHFHDHTLMIVFLISSLVLYIITLMLTTKLTHTSTMDAQEVETVWTILPAIILILIALPSLRILYMMDEINNPSLTVKTMGHQWYWSYEYTDYEDLNFDSYMIPTQELKPGELRLLEVDNRVVLPMEMTVRMLISSEDVLHSWAVPSLGLKTDAIPGRLNQTTLMAMRPGLYYGQCSEICGSNHSFMPIVLEMVPLSYFETWSAVMV.

The Mitochondrial intermembrane portion of the chain corresponds to 1-14 (MAYPFQLGLQDATS). Residues 15-45 (PIMEELLHFHDHTLMIVFLISSLVLYIITLM) traverse the membrane as a helical segment. At 46 to 59 (LTTKLTHTSTMDAQ) the chain is on the mitochondrial matrix side. The helical transmembrane segment at 60–87 (EVETVWTILPAIILILIALPSLRILYMM) threads the bilayer. The Mitochondrial intermembrane segment spans residues 88–227 (DEINNPSLTV…YFETWSAVMV (140 aa)). Residues histidine 161, cysteine 196, glutamate 198, cysteine 200, histidine 204, and methionine 207 each coordinate Cu cation. Glutamate 198 serves as a coordination point for Mg(2+). Phosphotyrosine is present on tyrosine 218.

It belongs to the cytochrome c oxidase subunit 2 family. As to quaternary structure, component of the cytochrome c oxidase (complex IV, CIV), a multisubunit enzyme composed of 14 subunits. The complex is composed of a catalytic core of 3 subunits MT-CO1, MT-CO2 and MT-CO3, encoded in the mitochondrial DNA, and 11 supernumerary subunits COX4I, COX5A, COX5B, COX6A, COX6B, COX6C, COX7A, COX7B, COX7C, COX8 and NDUFA4, which are encoded in the nuclear genome. The complex exists as a monomer or a dimer and forms supercomplexes (SCs) in the inner mitochondrial membrane with NADH-ubiquinone oxidoreductase (complex I, CI) and ubiquinol-cytochrome c oxidoreductase (cytochrome b-c1 complex, complex III, CIII), resulting in different assemblies (supercomplex SCI(1)III(2)IV(1) and megacomplex MCI(2)III(2)IV(2)). Found in a complex with TMEM177, COA6, COX18, COX20, SCO1 and SCO2. Interacts with TMEM177 in a COX20-dependent manner. Interacts with COX20. Interacts with COX16. The cofactor is Cu cation.

The protein localises to the mitochondrion inner membrane. It catalyses the reaction 4 Fe(II)-[cytochrome c] + O2 + 8 H(+)(in) = 4 Fe(III)-[cytochrome c] + 2 H2O + 4 H(+)(out). Its function is as follows. Component of the cytochrome c oxidase, the last enzyme in the mitochondrial electron transport chain which drives oxidative phosphorylation. The respiratory chain contains 3 multisubunit complexes succinate dehydrogenase (complex II, CII), ubiquinol-cytochrome c oxidoreductase (cytochrome b-c1 complex, complex III, CIII) and cytochrome c oxidase (complex IV, CIV), that cooperate to transfer electrons derived from NADH and succinate to molecular oxygen, creating an electrochemical gradient over the inner membrane that drives transmembrane transport and the ATP synthase. Cytochrome c oxidase is the component of the respiratory chain that catalyzes the reduction of oxygen to water. Electrons originating from reduced cytochrome c in the intermembrane space (IMS) are transferred via the dinuclear copper A center (CU(A)) of subunit 2 and heme A of subunit 1 to the active site in subunit 1, a binuclear center (BNC) formed by heme A3 and copper B (CU(B)). The BNC reduces molecular oxygen to 2 water molecules using 4 electrons from cytochrome c in the IMS and 4 protons from the mitochondrial matrix. This Vulpes vulpes (Red fox) protein is Cytochrome c oxidase subunit 2 (MT-CO2).